The following is a 429-amino-acid chain: Argininosuccinate lyase (429 aa).

The protein belongs to the lyase 1 family. Argininosuccinate lyase subfamily.

The protein localises to the cytoplasm. It catalyses the reaction 2-(N(omega)-L-arginino)succinate = fumarate + L-arginine. It participates in amino-acid biosynthesis; L-arginine biosynthesis; L-arginine from L-ornithine and carbamoyl phosphate: step 3/3. This chain is Argininosuccinate lyase, found in Pyrobaculum aerophilum (strain ATCC 51768 / DSM 7523 / JCM 9630 / CIP 104966 / NBRC 100827 / IM2).